The primary structure comprises 233 residues: UPF0502 protein Sden_2282 (233 aa).

The segment covering 178-198 (TQHQRPPQTPHLSSRTNVDNS) has biased composition (polar residues). Residues 178 to 204 (TQHQRPPQTPHLSSRTNVDNSYESDER) form a disordered region.

It belongs to the UPF0502 family.

The protein is UPF0502 protein Sden_2282 of Shewanella denitrificans (strain OS217 / ATCC BAA-1090 / DSM 15013).